The chain runs to 985 residues: Na(+)/H(+) antiporter (985 aa).

The Cytoplasmic portion of the chain corresponds to 1 to 12; sequence MAIWEQLEVSKA. Residues 13–33 form a helical membrane-spanning segment; it reads HVAYACVGVFSSIFSLVSLYV. At 34–36 the chain is on the extracellular side; that stretch reads KEK. The chain crosses the membrane as a helical span at residues 37–57; that stretch reads LYIGESTVAGIFGLIVGPVCL. Over 58–70 the chain is Cytoplasmic; it reads NWFNPLKWGNSDS. The chain crosses the membrane as a helical span at residues 71–91; it reads ITLEITRIVLCLQIFAVAVEL. Residues 92–105 lie on the Extracellular side of the membrane; it reads PRKYMLKHWVSVTM. A helical membrane pass occupies residues 106 to 126; sequence LLLPVMTAGWLIIGLFVWILI. Residues 127–128 lie on the Cytoplasmic side of the membrane; that stretch reads PG. Residues 129-149 form a helical membrane-spanning segment; sequence LNFSASLLISACITATDPILA. Topologically, residues 150 to 176 are extracellular; the sequence is QSVVSGKFAQRVPGHLRNLLSAESGCN. A helical membrane pass occupies residues 177–197; sequence DGMAFPFLFLSMNLILHPGNG. Residues 198–203 are Cytoplasmic-facing; sequence REIVKD. The chain crosses the membrane as a helical span at residues 204-224; the sequence is WICVTILYECLFGCLLGCFIG. Residues 225–244 lie on the Extracellular side of the membrane; the sequence is YVGRITIRFAEKKNIIDRES. A helical transmembrane segment spans residues 245-265; sequence FLAFYVVLAFMCAGFGSILGV. Over 266–294 the chain is Cytoplasmic; sequence DDLLVSFAAGATFAWDGWFSQKTQESNVS. A helical membrane pass occupies residues 295 to 315; that stretch reads TVIDLLLNYAYFIYFGAIIPW. Residues 316–319 are Extracellular-facing; that stretch reads SQFN. A helical transmembrane segment spans residues 320–340; the sequence is NGEIGTNVWRLIILSIVVIFL. Residues 341–361 are Cytoplasmic-facing; that stretch reads RRIPAVMILRPLIPDIKSWRE. A helical membrane pass occupies residues 362-382; it reads ALFVGHFGPIGVGAIFAAILA. Topologically, residues 383-410 are extracellular; that stretch reads RGELESTFSDEPTPLNVVPSKEESKHWQ. A helical transmembrane segment spans residues 411-431; the sequence is LIACIWPITCFFIVTSIIVHG. Residues 432 to 985 are Cytoplasmic-facing; it reads SSVAIITLGR…ALSKTLGLNK (554 aa). 2 disordered regions span residues 489–701 and 726–760; these read MTLS…KPGT and DRNEARDDEVSVDSTAHSSLTTTMTNLSSSSGGRL. Residues 517–526 show a composition bias toward polar residues; the sequence is NNDQIGSVAT. Residues 538-558 show a composition bias toward basic residues; sequence PRRRKLSRKEKRLNRRQKLRN. Composition is skewed to basic and acidic residues over residues 559-572 and 580-593; these read KGREIFSSRSKNEM and DLGRERLQKEKEAR. A Phosphoserine modification is found at S568. The segment covering 637–646 has biased composition (low complexity); it reads SFESSERSSS. Positions 661 to 675 are enriched in acidic residues; that stretch reads EETESEIESEDEMEN. Residues 676 to 698 show a composition bias toward basic and acidic residues; that stretch reads ESERSMASSEERRIRKMKEEEMK. A compositionally biased stretch (low complexity) spans 743-756; the sequence is SSLTTTMTNLSSSS. A Phosphothreonine modification is found at T765. Phosphoserine is present on residues S768 and S774. The tract at residues 812–985 is disordered; it reads INPHKSDDDK…ALSKTLGLNK (174 aa). Composition is skewed to basic and acidic residues over residues 815–828 and 854–863; these read HKSDDDKSKNRPRN and DEEKAIEGPS. A compositionally biased stretch (acidic residues) spans 887 to 920; that stretch reads LDLEDEPSSEEDLGDSYNMDDSEDYDDNAYESET. The segment covering 970–979 has biased composition (low complexity); that stretch reads SAAVKSALSK.

Belongs to the fungal Na(+)/H(+) exchanger family.

Its subcellular location is the cell membrane. Sodium export from cell, takes up external protons in exchange for internal sodium ions. Also capable of exporting potassium ions. This chain is Na(+)/H(+) antiporter (NHA1), found in Saccharomyces cerevisiae (strain ATCC 204508 / S288c) (Baker's yeast).